Here is a 477-residue protein sequence, read N- to C-terminus: Proline--tRNA ligase (477 aa).

This sequence belongs to the class-II aminoacyl-tRNA synthetase family. ProS type 3 subfamily. In terms of assembly, homodimer.

Its subcellular location is the cytoplasm. It catalyses the reaction tRNA(Pro) + L-proline + ATP = L-prolyl-tRNA(Pro) + AMP + diphosphate. Functionally, catalyzes the attachment of proline to tRNA(Pro) in a two-step reaction: proline is first activated by ATP to form Pro-AMP and then transferred to the acceptor end of tRNA(Pro). This chain is Proline--tRNA ligase, found in Lachnoclostridium phytofermentans (strain ATCC 700394 / DSM 18823 / ISDg) (Clostridium phytofermentans).